Consider the following 195-residue polypeptide: Transmembrane protein 126A (195 aa).

Over 1–33 (MENHKSNNKENITIVDISRKINQLPEAERNLLE) the chain is Mitochondrial matrix. The helical transmembrane segment at 34 to 54 (NGSVYVGLNAALCGLIANSLF) threads the bilayer. Topologically, residues 55–56 (RR) are mitochondrial intermembrane. The chain crosses the membrane as a helical span at residues 57–77 (ILNVTKARIAAGLPMAGIPFL). The Mitochondrial matrix segment spans residues 78 to 110 (TTDLTYRCFVSFPLNTGDLDCETCTITRSGLTG). A helical transmembrane segment spans residues 111-131 (LVIGGLYPVFLAIPVNGGLAA). Over 132–158 (RYQSALLPHKGNILSYWIRTSKPVFRK) the chain is Mitochondrial intermembrane. The chain crosses the membrane as a helical span at residues 159–175 (MLFPILLQTMFSAYLGS). Residues 176–195 (EQYKLLIKALQLSEPGKEIH) are Mitochondrial matrix-facing.

Belongs to the TMEM126 family. Interacts with OXA1L; promoting cotranslational quality control in mitochondria. In terms of tissue distribution, strongly expressed in brain, cerebellum, skeletal muscle, testis. High expression also found in fetal brain, fetal retinal pigmentary epithelium, and fetal retina. Highly expressed in retinal ganglion cells.

It is found in the mitochondrion inner membrane. Its function is as follows. Protein required for the cotranslational protein quality control in the inner membrane of the mitochondria. Associates with newly synthesized polypeptides and may act as a chaperone that cooperates with OXA1L for the insertion of newly synthesized mitochondrial proteins into the inner membrane. Required for the assembly of the ND4 module of mitochondrial complex I. In Homo sapiens (Human), this protein is Transmembrane protein 126A.